We begin with the raw amino-acid sequence, 223 residues long: UPF0441 protein YgiB (223 aa).

A disordered region spans residues 201–223 (ESVAKQSAMQRSAAGTSTRSMGG). The segment covering 204–223 (AKQSAMQRSAAGTSTRSMGG) has biased composition (polar residues).

The protein belongs to the UPF0441 family.

This is UPF0441 protein YgiB from Salmonella arizonae (strain ATCC BAA-731 / CDC346-86 / RSK2980).